A 135-amino-acid polypeptide reads, in one-letter code: Large ribosomal subunit protein uL16c (135 aa).

The protein belongs to the universal ribosomal protein uL16 family. In terms of assembly, part of the 50S ribosomal subunit.

It localises to the plastid. The protein localises to the chloroplast. This Platanus occidentalis (Sycamore) protein is Large ribosomal subunit protein uL16c.